A 378-amino-acid chain; its full sequence is 3-dehydroquinate synthase (378 aa).

NAD(+) contacts are provided by residues 115-119, 139-140, K152, and K161; these read GVVGD and TS. Residues E194, H256, and H275 each contribute to the Zn(2+) site.

It belongs to the sugar phosphate cyclases superfamily. Dehydroquinate synthase family. Co(2+) is required as a cofactor. Zn(2+) serves as cofactor. The cofactor is NAD(+).

It localises to the cytoplasm. It catalyses the reaction 7-phospho-2-dehydro-3-deoxy-D-arabino-heptonate = 3-dehydroquinate + phosphate. It participates in metabolic intermediate biosynthesis; chorismate biosynthesis; chorismate from D-erythrose 4-phosphate and phosphoenolpyruvate: step 2/7. In terms of biological role, catalyzes the conversion of 3-deoxy-D-arabino-heptulosonate 7-phosphate (DAHP) to dehydroquinate (DHQ). This Brucella suis (strain ATCC 23445 / NCTC 10510) protein is 3-dehydroquinate synthase.